A 357-amino-acid chain; its full sequence is Probable cinnamyl alcohol dehydrogenase 1 (357 aa).

Cys-47 serves as a coordination point for Zn(2+). An NADP(+)-binding site is contributed by Thr-49. Zn(2+) is bound by residues His-69, Glu-70, Cys-100, Cys-103, Cys-106, Cys-114, and Cys-163. NADP(+)-binding positions include Thr-167, 188–193 (GLGGVG), 211–216 (SSSNKK), Thr-251, Gly-275, and 298–300 (SFI).

The protein belongs to the zinc-containing alcohol dehydrogenase family. In terms of assembly, homodimer. Requires Zn(2+) as cofactor. In terms of processing, the N-terminus is blocked.

It catalyses the reaction (E)-cinnamyl alcohol + NADP(+) = (E)-cinnamaldehyde + NADPH + H(+). It carries out the reaction (E)-coniferol + NADP(+) = (E)-coniferaldehyde + NADPH + H(+). The enzyme catalyses (E)-sinapyl alcohol + NADP(+) = (E)-sinapaldehyde + NADPH + H(+). The catalysed reaction is (E)-4-coumaroyl alcohol + NADP(+) = (E)-4-coumaraldehyde + NADPH + H(+). It catalyses the reaction (E)-caffeyl alcohol + NADP(+) = (E)-caffeyl aldehyde + NADPH + H(+). It functions in the pathway aromatic compound metabolism; phenylpropanoid biosynthesis. Involved in lignin biosynthesis. Catalyzes the final step specific for the production of lignin monomers. Catalyzes the NADPH-dependent reduction of coniferaldehyde, 5-hydroxyconiferaldehyde, sinapaldehyde, 4-coumaraldehyde and caffeyl aldehyde to their respective alcohols. The sequence is that of Probable cinnamyl alcohol dehydrogenase 1 from Nicotiana tabacum (Common tobacco).